Consider the following 701-residue polypeptide: Putative pentatricopeptide repeat-containing protein At3g25970 (701 aa).

PPR repeat units lie at residues 34–64 (DIYV…MPKR), 65–99 (DSVS…GSDV), 100–134 (DGYS…GYEC), 135–165 (NVYV…ISEP), 166–200 (NSVS…AAVT), 202–236 (DAGT…GLQH), 237–267 (EITI…LGGS), 269–303 (DLIS…WVET), 304–338 (DIYT…GLEQ), 339–371 (VTSA…LKSK), 372–406 (DLIS…EIKV), 407–441 (DDYA…GFVS), 442–472 (NEFV…ISSK), 474–508 (STVA…NVKL), 509–539 (DHVT…MEPV), and 545–575 (RMEH…MPLN). The type E motif stretch occupies residues 580 to 655 (VLKTFLGVCR…VPGWSWIEIR (76 aa)). Positions 656–686 (NQVKAFNAEDRSNPLCQDIYMMIKDLTQEMQ) are type E(+) motif.

Belongs to the PPR family. PCMP-E subfamily.

The sequence is that of Putative pentatricopeptide repeat-containing protein At3g25970 (PCMP-E46) from Arabidopsis thaliana (Mouse-ear cress).